A 1580-amino-acid polypeptide reads, in one-letter code: Dynamin-binding protein (1580 aa).

Residue methionine 1 is modified to N-acetylmethionine. SH3 domains are found at residues glutamate 2–isoleucine 61, glutamate 66–leucine 127, and tyrosine 146–proline 205. Disordered regions lie at residues glutamate 211 to serine 245, asparagine 304 to leucine 446, tyrosine 500 to aspartate 546, and arginine 589 to phenylalanine 688. A compositionally biased stretch (acidic residues) spans valine 229 to glutamine 243. In terms of domain architecture, SH3 4 spans glutamine 244 to serine 303. Polar residues-rich tracts occupy residues glutamine 422 to proline 439 and glutamine 502 to serine 513. Basic and acidic residues predominate over residues aspartate 516 to leucine 527. The span at arginine 608–proline 617 shows a compositional bias: pro residues. The segment covering alanine 671–lysine 682 has biased composition (basic and acidic residues). Phosphoserine is present on serine 683. Residues leucine 694 to threonine 755 adopt a coiled-coil conformation. The DH domain occupies lysine 783–tyrosine 970. A BAR domain is found at leucine 1011–leucine 1220. The SH3 5 domain occupies proline 1288–proline 1351. A compositionally biased stretch (low complexity) spans serine 1356–serine 1365. 2 disordered regions span residues serine 1356–serine 1384 and threonine 1426–glutamate 1514. A compositionally biased stretch (polar residues) spans threonine 1426–proline 1440. In terms of domain architecture, SH3 6 spans glutamate 1516–tyrosine 1579.

As to quaternary structure, binds DNM1 via its N-terminal SH3 domains. The C-terminal SH3 domain binds a complex containing actin, tubulin, Hsp70 and actin-regulatory proteins, such as ENAH, EVL, WIRE, CR16, WAVE1 and NAP1L1. Interacts with FASLG. Interacts (via SH3 domain 6) with WASL. Interacts (via SH3 domain 6) interacts with ENAH. Interacts (via C-terminal domain) with TJP1; required for the apical cell-cell junction localization of DNMBP.

Its subcellular location is the cytoplasm. The protein resides in the golgi apparatus. The protein localises to the golgi stack. It localises to the cytoskeleton. It is found in the synapse. Its subcellular location is the cell junction. In terms of biological role, plays a critical role as a guanine nucleotide exchange factor (GEF) for CDC42 in several intracellular processes associated with the actin and microtubule cytoskeleton. Regulates the structure of apical junctions in epithelial cells. Participates in the normal lumenogenesis of epithelial cell cysts by regulating spindle orientation. Plays a role in ciliogenesis. May play a role in membrane trafficking between the cell surface and the Golgi. The polypeptide is Dynamin-binding protein (Mus musculus (Mouse)).